A 291-amino-acid polypeptide reads, in one-letter code: GTPase Era (291 aa).

The Era-type G domain maps to 2–167 (KSGFVSIIGR…LDEIVKYLDE (166 aa)). The segment at 10 to 17 (GRTNAGKS) is G1. 10–17 (GRTNAGKS) is a binding site for GTP. The interval 36-40 (NATRR) is G2. The tract at residues 57–60 (DTPG) is G3. GTP-binding positions include 57 to 61 (DTPGL) and 116 to 119 (NKVD). A G4 region spans residues 116 to 119 (NKVD). The G5 stretch occupies residues 146 to 148 (YSS). Residues 186 to 274 (YRDFILESIY…LLKLFVTVKK (89 aa)) form the KH type-2 domain.

Belongs to the TRAFAC class TrmE-Era-EngA-EngB-Septin-like GTPase superfamily. Era GTPase family. Monomer.

It is found in the cytoplasm. Its subcellular location is the cell inner membrane. Its function is as follows. An essential GTPase that binds both GDP and GTP, with rapid nucleotide exchange. Plays a role in 16S rRNA processing and 30S ribosomal subunit biogenesis and possibly also in cell cycle regulation and energy metabolism. The polypeptide is GTPase Era (Campylobacter jejuni subsp. jejuni serotype O:23/36 (strain 81-176)).